The following is a 32-amino-acid chain: Photosystem II reaction center protein T (32 aa).

The chain crosses the membrane as a helical span at residues 3–23; that stretch reads ALVYTFLLVATLGIIFFAIFF.

It belongs to the PsbT family. PSII is composed of 1 copy each of membrane proteins PsbA, PsbB, PsbC, PsbD, PsbE, PsbF, PsbH, PsbI, PsbJ, PsbK, PsbL, PsbM, PsbT, PsbY, PsbZ, Psb30/Ycf12, at least 3 peripheral proteins of the oxygen-evolving complex and a large number of cofactors. It forms dimeric complexes.

It localises to the plastid. The protein localises to the chloroplast thylakoid membrane. Functionally, found at the monomer-monomer interface of the photosystem II (PS II) dimer, plays a role in assembly and dimerization of PSII. PSII is a light-driven water plastoquinone oxidoreductase, using light energy to abstract electrons from H(2)O, generating a proton gradient subsequently used for ATP formation. This chain is Photosystem II reaction center protein T, found in Psilotum nudum (Whisk fern).